Reading from the N-terminus, the 393-residue chain is Methylthioribose kinase (393 aa).

ATP-binding positions include Asn-38, Lys-53, and 107–109 (EDL). Asp-225 contacts substrate. 242–244 (DPE) contacts ATP. Arg-332 provides a ligand contact to substrate.

This sequence belongs to the methylthioribose kinase family. Homodimer.

It catalyses the reaction 5-(methylsulfanyl)-D-ribose + ATP = 5-(methylsulfanyl)-alpha-D-ribose 1-phosphate + ADP + H(+). It functions in the pathway amino-acid biosynthesis; L-methionine biosynthesis via salvage pathway; S-methyl-5-thio-alpha-D-ribose 1-phosphate from S-methyl-5'-thioadenosine (hydrolase route): step 2/2. In terms of biological role, catalyzes the phosphorylation of methylthioribose into methylthioribose-1-phosphate. This chain is Methylthioribose kinase, found in Bacillus thuringiensis subsp. konkukian (strain 97-27).